The following is a 154-amino-acid chain: SsrA-binding protein (154 aa).

It belongs to the SmpB family.

Its subcellular location is the cytoplasm. Required for rescue of stalled ribosomes mediated by trans-translation. Binds to transfer-messenger RNA (tmRNA), required for stable association of tmRNA with ribosomes. tmRNA and SmpB together mimic tRNA shape, replacing the anticodon stem-loop with SmpB. tmRNA is encoded by the ssrA gene; the 2 termini fold to resemble tRNA(Ala) and it encodes a 'tag peptide', a short internal open reading frame. During trans-translation Ala-aminoacylated tmRNA acts like a tRNA, entering the A-site of stalled ribosomes, displacing the stalled mRNA. The ribosome then switches to translate the ORF on the tmRNA; the nascent peptide is terminated with the 'tag peptide' encoded by the tmRNA and targeted for degradation. The ribosome is freed to recommence translation, which seems to be the essential function of trans-translation. The polypeptide is SsrA-binding protein (Lachnoclostridium phytofermentans (strain ATCC 700394 / DSM 18823 / ISDg) (Clostridium phytofermentans)).